The primary structure comprises 379 residues: Phospho-N-acetylmuramoyl-pentapeptide-transferase (379 aa).

Transmembrane regions (helical) follow at residues 27 to 47 (FRTAFASLTALFMGLIIGPAV), 76 to 96 (TMGGVLITIAIIVPTLLWADL), 100 to 120 (FVWIAMLATIAFGAIGFTDDY), 135 to 155 (AKMGLQILVAILVAISLVLVQ), 185 to 205 (PHIWIIAYIPFLAFVAIVLVG), 218 to 238 (GLAIGCTVIAAGALTVLTYVS), 255 to 275 (VGELSIFCGAMVGSAIGFLWY), 283 to 303 (FMGDVGSLALGGAIGTVAVII), 307 to 327 (LLLPFIGGVFVLEALSVILQV), and 356 to 376 (KIIVRFWIASLVFALFALTTL).

This sequence belongs to the glycosyltransferase 4 family. MraY subfamily. Mg(2+) is required as a cofactor.

Its subcellular location is the cell inner membrane. It carries out the reaction UDP-N-acetyl-alpha-D-muramoyl-L-alanyl-gamma-D-glutamyl-meso-2,6-diaminopimeloyl-D-alanyl-D-alanine + di-trans,octa-cis-undecaprenyl phosphate = di-trans,octa-cis-undecaprenyl diphospho-N-acetyl-alpha-D-muramoyl-L-alanyl-D-glutamyl-meso-2,6-diaminopimeloyl-D-alanyl-D-alanine + UMP. It participates in cell wall biogenesis; peptidoglycan biosynthesis. Its function is as follows. Catalyzes the initial step of the lipid cycle reactions in the biosynthesis of the cell wall peptidoglycan: transfers peptidoglycan precursor phospho-MurNAc-pentapeptide from UDP-MurNAc-pentapeptide onto the lipid carrier undecaprenyl phosphate, yielding undecaprenyl-pyrophosphoryl-MurNAc-pentapeptide, known as lipid I. In Koribacter versatilis (strain Ellin345), this protein is Phospho-N-acetylmuramoyl-pentapeptide-transferase.